A 2087-amino-acid polypeptide reads, in one-letter code: Rho GTPase-activating protein 32 (2087 aa).

Residues 131 to 245 enclose the PX; atypical domain; sequence GSIQLSLSEE…LTWMEIDNKG (115 aa). The 63-residue stretch at 259–321 folds into the SH3 domain; the sequence is PAVGAAHVIK…PGHCVELINQ (63 aa). Positions 372 to 567 constitute a Rho-GAP domain; sequence CDLGEHLLNS…FILNHVDVLF (196 aa). Phosphoserine occurs at positions 706, 709, 732, and 738. The disordered stretch occupies residues 818–858; that stretch reads FLDSPGYSKDKPSANKKDAETGSSQCQTPGSTASSEPVSPL. The span at 825 to 837 shows a compositional bias: basic and acidic residues; the sequence is SKDKPSANKKDAE. Polar residues predominate over residues 838 to 854; that stretch reads TGSSQCQTPGSTASSEP. Residues serine 852, serine 856, and serine 892 each carry the phosphoserine modification. The segment covering 927 to 938 has biased composition (low complexity); the sequence is SNTTAQNASSST. Disordered regions lie at residues 927–1038, 1103–1143, and 1169–1257; these read SNTT…PPKN, PAEQ…EQHH, and VPLD…ENTS. Phosphoserine is present on serine 952. 2 stretches are compositionally biased toward low complexity: residues 994–1005 and 1019–1029; these read SVSSSQSKAVAS and QDSVPVSSVSL. Polar residues predominate over residues 1124–1138; the sequence is TTATGDPTHSNTTES. Basic and acidic residues predominate over residues 1172–1182; that stretch reads DSEKSDDHVSF. The segment covering 1188–1203 has biased composition (polar residues); it reads GKNSMPTVSFLDQDQS. Position 1203 is a phosphoserine (serine 1203). A compositionally biased stretch (basic and acidic residues) spans 1222–1232; sequence DKLHHPLEFAD. Residues 1391 to 1711 are interaction with GAB2; the sequence is RVPLLHLRAE…YSYAGLAPRP (321 aa). Asymmetric dimethylarginine is present on residues arginine 1523 and arginine 1533. Position 1585 is a phosphoserine (serine 1585). The interaction with FYN stretch occupies residues 1685-2087; that stretch reads PNRDFAFYNP…QHPETQIHAE (403 aa). The tract at residues 1798–1896 is disordered; sequence PGKTGLLSVA…QFCESKNGPP (99 aa). The span at 1823 to 1838 shows a compositional bias: basic and acidic residues; it reads GEDRFYRRHPEAEMDR. A compositionally biased stretch (polar residues) spans 1847-1862; it reads STQPEKPSLPQKQSSL. Residues 1875 to 1889 show a composition bias toward basic and acidic residues; sequence PEHRAHQEASHRQFC. Arginine 2037 bears the Omega-N-methylarginine mark.

This sequence belongs to the PX domain-containing GAP family. Interacts with NTRK1 (via cytoplasmic domain); the interaction is independent of the phosphorylation state of NTRK1. Interacts with SHC3 (via SH2 domain). Interacts with RASA1 (via SH3 domain); the interaction is necessary for the Ras activation and cell transforming activities of ARHGAP32. Interacts with GAB1 and GAB2. Interacts with CRK and CRKL. Found in a complex with CRKL and BCAR1; upon EGF stimulation BCAR1 may be replaced by EGFR. Interacts with NCK1 (via SH3 domain); NCK1 recruits phosphorylated BCAR1 to the complex. Isoform 2 interacts with FYN; the interaction appears to be dependent on tyrosine phosphorylation of ARHGAP32. Interacts with EGFR; the interaction requires EGF stimulation and is increased by SHC3. Interacts with CDC42; the interaction requires constitutively active CDC42. Interacts with CTNNB1. Interacts with GRIN2B. Interacts with DLG4 and CDH2. Interacts with GPHN. Post-translationally, isoform 2 is phosphorylated on multiple tyrosine residues by FYN. Phosphorylated tyrosine residues undergo dephosphorylation after stimulation of NMDA receptors. Phosphorylated in vitro by CaMK2 in the presence of calmodulin and calcium; which inhibits GAP activity. As to expression, isoform 1 and isoform 2 are highly expressed in brain and testis. Isoform 1 is also expressed in other tissues such as lung, liver and spleen.

It is found in the postsynaptic density. The protein resides in the cell projection. The protein localises to the dendritic spine. Its subcellular location is the cytoplasm. It localises to the cell cortex. It is found in the endosome membrane. The protein resides in the golgi apparatus membrane. The protein localises to the endoplasmic reticulum membrane. Its subcellular location is the membrane. GTPase-activating protein (GAP) promoting GTP hydrolysis on RHOA, CDC42 and RAC1 small GTPases. May be involved in the differentiation of neuronal cells during the formation of neurite extensions. Involved in NMDA receptor activity-dependent actin reorganization in dendritic spines. May mediate cross-talks between Ras- and Rho-regulated signaling pathways in cell growth regulation. Isoform 2 has higher GAP activity. In Homo sapiens (Human), this protein is Rho GTPase-activating protein 32 (ARHGAP32).